The chain runs to 361 residues: S-adenosylmethionine decarboxylase proenzyme (361 aa).

Catalysis depends on residues glutamate 11 and glutamate 14. Serine 71 functions as the Schiff-base intermediate with substrate; via pyruvic acid in the catalytic mechanism. A Pyruvic acid (Ser); by autocatalysis modification is found at serine 71. The Proton donor; for catalytic activity role is filled by cysteine 85. Active-site proton acceptor; for processing activity residues include serine 234 and histidine 247.

It belongs to the eukaryotic AdoMetDC family. The cofactor is pyruvate. Is synthesized initially as an inactive proenzyme. Formation of the active enzyme involves a self-maturation process in which the active site pyruvoyl group is generated from an internal serine residue via an autocatalytic post-translational modification. Two non-identical subunits are generated from the proenzyme in this reaction, and the pyruvate is formed at the N-terminus of the alpha chain, which is derived from the carboxyl end of the proenzyme. The post-translation cleavage follows an unusual pathway, termed non-hydrolytic serinolysis, in which the side chain hydroxyl group of the serine supplies its oxygen atom to form the C-terminus of the beta chain, while the remainder of the serine residue undergoes an oxidative deamination to produce ammonia and the pyruvoyl group blocking the N-terminus of the alpha chain.

The enzyme catalyses S-adenosyl-L-methionine + H(+) = S-adenosyl 3-(methylsulfanyl)propylamine + CO2. It participates in amine and polyamine biosynthesis; S-adenosylmethioninamine biosynthesis; S-adenosylmethioninamine from S-adenosyl-L-methionine: step 1/1. The polypeptide is S-adenosylmethionine decarboxylase proenzyme (SAMDC) (Daucus carota (Wild carrot)).